The primary structure comprises 1121 residues: Pleckstrin homology domain-containing family A member 7 (1121 aa).

2 WW domains span residues 9-42 and 54-87; these read DTLPEHWSYGVCRDGRVFFINDQLRCTTWLHPRT and SDLPRGWEEGFTEEGASYFIDHNQQTTAFRHPVT. The tract at residues 105 to 137 is disordered; the sequence is PHMSKQDRNQRPSSMVSETSTAGTASTLEAKPG. Residues 115-131 are compositionally biased toward polar residues; the sequence is RPSSMVSETSTAGTAST. Positions 164–282 constitute a PH domain; the sequence is PVVVRGWLHK…WVRAMNQAAQ (119 aa). Positions 299–514 are disordered; the sequence is QAVPQANHTE…LKMSSEERRA (216 aa). Basic and acidic residues-rich tracts occupy residues 308–356 and 437–446; these read ESCH…EGKR and HWARAQKGDS. Positions 460–475 are enriched in polar residues; sequence PGQSLSFPENYQTLPK. Residues 497–514 are compositionally biased toward basic and acidic residues; sequence YAQDRASHLKMSSEERRA. Residues Ser536, Ser545, Ser569, Ser604, Ser608, and Ser612 each carry the phosphoserine modification. An interaction with CTNND1 region spans residues 538–696; that stretch reads TAPICLGSPE…AESDTDVKLS (159 aa). The tract at residues 547 to 632 is disordered; it reads EFTDQGRSRS…NSSHVDRRSM (86 aa). Over residues 567–582 the composition is skewed to pro residues; sequence PPSPSDIPPPGPPRVF. Residues 589 to 605 show a composition bias toward basic and acidic residues; the sequence is TPAERVTVKPPDQRRSV. A coiled-coil region spans residues 700–801; that stretch reads EQDRVLQDLE…LQEQHRRAFF (102 aa). 2 disordered regions span residues 841-876 and 888-971; these read RKTVPLFPHPPVPSLSTSESKPPPQPSPPTSPVRTP and YVPY…ELGQ. Ser858, Ser860, and Ser867 each carry phosphoserine. Positions 861-871 are enriched in pro residues; the sequence is KPPPQPSPPTS. Thr870 is subject to Phosphothreonine. Residues Ser871, Ser903, and Ser907 each carry the phosphoserine modification. Pro residues predominate over residues 933-942; that stretch reads DQPPAVPPLP. Residues 958-969 are compositionally biased toward basic and acidic residues; sequence RQSDERKRDREL. The residue at position 986 (Ser986) is a Phosphoserine. Disordered stretches follow at residues 1003–1028 and 1082–1121; these read GLVGPESRYQTLPGRGLSGSTSRLQQ and RHQKALVRERKRTLGQGERTGLPSSRYLSRPLPGDLGSVC. Positions 1067-1094 form a coiled coil; the sequence is QRGKMSAEEQLERMKRHQKALVRERKRT. Residues 1082–1094 show a composition bias toward basic residues; sequence RHQKALVRERKRT.

As to quaternary structure, interacts with CAMSAP3 and CTNND1. Interacts (via WW domains) with TSPAN33 (via cytoplasmic domain) and with PDZD11; the interaction with TSPAN33 is dependent on PDZD11 being bound to PLEKHA7 and facilitates the docking of ADAM10 to zonula adherens through interaction of TSPAN33 with ADAM10.

The protein localises to the cell junction. It is found in the adherens junction. It localises to the cytoplasm. The protein resides in the cytoskeleton. Its subcellular location is the microtubule organizing center. The protein localises to the centrosome. Required for zonula adherens biogenesis and maintenance. Acts via its interaction with CAMSAP3, which anchors microtubules at their minus-ends to zonula adherens, leading to the recruitment of KIFC3 kinesin to the junctional site. Mediates docking of ADAM10 to zonula adherens through a PDZD11-dependent interaction with the ADAM10-binding protein TSPAN33. In Homo sapiens (Human), this protein is Pleckstrin homology domain-containing family A member 7 (PLEKHA7).